A 475-amino-acid chain; its full sequence is CAAX prenyl protease 1 homolog (475 aa).

The Lumenal portion of the chain corresponds to 1 to 18; it reads MGMWASVDAMWDFPAEKR. Residues 19–39 traverse the membrane as a helical segment; sequence IFGAVLLFSWTVYLWETFLAQ. The Nuclear portion of the chain corresponds to 40 to 81; it reads RQRRIYKTTTRVPAELEQIMDSDTFEKSRLYQLDKSTFSFWS. A helical membrane pass occupies residues 82–102; it reads GLYSEVEGTFILLFGGIPYLW. The Lumenal segment spans residues 103–123; sequence RLSGQFCSSAGFGPEYEIIQS. A helical transmembrane segment spans residues 124–144; the sequence is LVFLLLATLFSALTGLPWSLY. The Nuclear portion of the chain corresponds to 145–170; the sequence is NTFVIEEKHGFNHQTLEFFMKDAIKK. Residues 171-191 traverse the membrane as a helical segment; sequence FIVTQCILLPVSALLLYIIKI. Over 192-195 the chain is Lumenal; sequence GGDY. Residues 196-216 traverse the membrane as a helical segment; the sequence is FFIYAWLFTLVVSLVLVTIYA. The Nuclear segment spans residues 217-347; the sequence is DYIAPLFDKF…GHWKLGHTVK (131 aa). The disordered stretch occupies residues 293–314; the sequence is DNQEESGMEARNEGEGDSEEVK. Basic and acidic residues predominate over residues 300–314; the sequence is MEARNEGEGDSEEVK. His335 contacts Zn(2+). The active site involves Glu336. A Zn(2+)-binding site is contributed by His339. A helical membrane pass occupies residues 348-368; that stretch reads NIIISQMNSFLCFFLFAVLIG. The Lumenal segment spans residues 369 to 382; it reads RRELFAAFGFYDSQ. The chain crosses the membrane as a helical span at residues 383-405; the sequence is PTLIGLLIIFQFIFSPYNEVLSF. Residues 406-475 are Nuclear-facing; it reads CLTVLSRRFE…LQALKNAKQD (70 aa). Glu415 lines the Zn(2+) pocket.

It belongs to the peptidase M48A family. Zn(2+) serves as cofactor.

Its subcellular location is the endoplasmic reticulum membrane. It localises to the nucleus inner membrane. It is found in the early endosome membrane. The protein resides in the late endosome membrane. It catalyses the reaction Hydrolyzes the peptide bond -P2-(S-farnesyl or geranylgeranyl)C-P1'-P2'-P3'-COOH where P1' and P2' are amino acids with aliphatic side chains and P3' is any C-terminal residue.. Its activity is regulated as follows. Inhibited by HIV protease inhibitors, such as lopinavir, tipranavir and nelfinavir, leading to defects in lamin A/LMNA maturation and accumulation of prelamin-A/C precursors in cells. This causes defects in nuclear envelope integrity and release of DNA in the cytosol, activating the AIM2 inflammasome. In terms of biological role, transmembrane metalloprotease whose catalytic activity is critical for processing lamin A/LMNA on the inner nuclear membrane and clearing clogged translocons on the endoplasmic reticulum. Proteolytically removes the C-terminal three residues of farnesylated proteins. Also plays an antiviral role independently of its protease activity by restricting enveloped RNA and DNA viruses. Mechanistically, controls IFITM antiviral pathway to hinder viruses from breaching the endosomal barrier by modulating membrane fluidity. In Mus musculus (Mouse), this protein is CAAX prenyl protease 1 homolog.